The following is a 207-amino-acid chain: Small ribosomal subunit protein uS4 (207 aa).

Residues 31–51 form a disordered region; sequence KCKLDSKPGQHGRTSGARTSD. Residues 97–162 form the S4 RNA-binding domain; that stretch reads SRLDNVVYRM…QGRIRESLDL (66 aa).

The protein belongs to the universal ribosomal protein uS4 family. In terms of assembly, part of the 30S ribosomal subunit. Contacts protein S5. The interaction surface between S4 and S5 is involved in control of translational fidelity.

Functionally, one of the primary rRNA binding proteins, it binds directly to 16S rRNA where it nucleates assembly of the body of the 30S subunit. In terms of biological role, with S5 and S12 plays an important role in translational accuracy. The chain is Small ribosomal subunit protein uS4 from Bordetella bronchiseptica (strain ATCC BAA-588 / NCTC 13252 / RB50) (Alcaligenes bronchisepticus).